The primary structure comprises 148 residues: uncharacterized protein (148 aa).

Residues 7 to 29 form a helical membrane-spanning segment; the sequence is MLILMSLVKIVLTCLPTGVIEWL.

The protein resides in the membrane. This is an uncharacterized protein from Bacillus subtilis (strain 168).